The primary structure comprises 407 residues: MDIILGVVMFTLIVLALVLVILFAKSKLVPTGDITISVNDDPSLAIVTQPGGKLLSALAGAGVFVSSACGGGGSCGQCRVKVKSGGGDILPTELDHITKGEAREGERLACQVAMKTDMDIELPEEIFGVKKWECTVISNDNKATFIKELKLQIPDGESVPFRAGGYIQIEAPAHHVKYADYDIPEEYREDWEKFNLFRYESKVNEETIRAYSMANYPEEHGIIMLNVRIATPPPNNPDVAPGIMSSFIWSLKEGDKCTISGPFGEFFAKDTDAEMVFVGGGAGMAPMRSHIFDQLKRLHSKRKMSFWYGARSKREMFYVEDFDGLAADNDNFVWHCALSDPLPEDNWDGYTGFIHNVLYENYLRDHEAPEDCEYYMCGPPMMNAAVIGMLKDLGVEDENILLDDFGG.

A helical transmembrane segment spans residues Ile-3 to Phe-23. The 2Fe-2S ferredoxin-type domain occupies Gly-32 to Ile-126. The [2Fe-2S] cluster site is built by Cys-69, Cys-75, Cys-78, and Cys-110. An FAD-binding FR-type domain is found at Val-129–Lys-269. The catalytic stretch occupies residues Asp-272–Met-389.

It belongs to the NqrF family. Composed of six subunits; NqrA, NqrB, NqrC, NqrD, NqrE and NqrF. [2Fe-2S] cluster serves as cofactor. Requires FAD as cofactor.

It localises to the cell inner membrane. It carries out the reaction a ubiquinone + n Na(+)(in) + NADH + H(+) = a ubiquinol + n Na(+)(out) + NAD(+). In terms of biological role, NQR complex catalyzes the reduction of ubiquinone-1 to ubiquinol by two successive reactions, coupled with the transport of Na(+) ions from the cytoplasm to the periplasm. The first step is catalyzed by NqrF, which accepts electrons from NADH and reduces ubiquinone-1 to ubisemiquinone by a one-electron transfer pathway. The sequence is that of Na(+)-translocating NADH-quinone reductase subunit F from Vibrio campbellii (strain ATCC BAA-1116).